Here is an 86-residue protein sequence, read N- to C-terminus: Large ribosomal subunit protein bL27 (86 aa).

A disordered region spans residues 1-24 (MATKKAGGSSRNGRDSAGRRLGVK).

The protein belongs to the bacterial ribosomal protein bL27 family.

This is Large ribosomal subunit protein bL27 from Rickettsia conorii (strain ATCC VR-613 / Malish 7).